The chain runs to 331 residues: Glyceraldehyde-3-phosphate dehydrogenase (331 aa).

NAD(+)-binding positions include 10-11 (RI), D31, K75, and T117. D-glyceraldehyde 3-phosphate contacts are provided by residues 148–150 (SCT) and T179. Catalysis depends on C149, which acts as the Nucleophile. Residue N180 participates in NAD(+) binding. Residues R194, 207-208 (TG), and R230 each bind D-glyceraldehyde 3-phosphate. N311 serves as a coordination point for NAD(+).

This sequence belongs to the glyceraldehyde-3-phosphate dehydrogenase family. As to quaternary structure, homotetramer.

It localises to the cytoplasm. The catalysed reaction is D-glyceraldehyde 3-phosphate + phosphate + NAD(+) = (2R)-3-phospho-glyceroyl phosphate + NADH + H(+). The protein operates within carbohydrate degradation; glycolysis; pyruvate from D-glyceraldehyde 3-phosphate: step 1/5. Functionally, catalyzes the oxidative phosphorylation of glyceraldehyde 3-phosphate (G3P) to 1,3-bisphosphoglycerate (BPG) using the cofactor NAD. The first reaction step involves the formation of a hemiacetal intermediate between G3P and a cysteine residue, and this hemiacetal intermediate is then oxidized to a thioester, with concomitant reduction of NAD to NADH. The reduced NADH is then exchanged with the second NAD, and the thioester is attacked by a nucleophilic inorganic phosphate to produce BPG. This is Glyceraldehyde-3-phosphate dehydrogenase (gap) from Thermus aquaticus.